The following is a 238-amino-acid chain: Heme oxygenase (238 aa).

Residue histidine 17 coordinates heme b.

Belongs to the heme oxygenase family.

Its subcellular location is the plastid. It is found in the chloroplast. The enzyme catalyses heme b + 3 reduced [NADPH--hemoprotein reductase] + 3 O2 = biliverdin IXalpha + CO + Fe(2+) + 3 oxidized [NADPH--hemoprotein reductase] + 3 H2O + H(+). In terms of biological role, catalyzes the opening of the heme ring with the release of iron. Key enzyme in the synthesis of the chromophoric part of the photosynthetic antennae. The chain is Heme oxygenase (pbsA) from Pyropia yezoensis (Susabi-nori).